The sequence spans 35 residues: Probable L,D-transpeptidase ErfK/SrfK (35 aa).

Positions 1–21 (MRRVKLLCTALMLLASHGALA) are cleaved as a signal peptide.

It belongs to the YkuD family.

The protein resides in the periplasm. It functions in the pathway cell wall biogenesis; peptidoglycan biosynthesis. This is Probable L,D-transpeptidase ErfK/SrfK (erfK) from Klebsiella aerogenes (Enterobacter aerogenes).